We begin with the raw amino-acid sequence, 299 residues long: 4-hydroxy-tetrahydrodipicolinate synthase (299 aa).

T51 contributes to the pyruvate binding site. Residue Y139 is the Proton donor/acceptor of the active site. K167 (schiff-base intermediate with substrate) is an active-site residue. Position 209 (I209) interacts with pyruvate.

This sequence belongs to the DapA family. As to quaternary structure, homotetramer; dimer of dimers.

Its subcellular location is the cytoplasm. It carries out the reaction L-aspartate 4-semialdehyde + pyruvate = (2S,4S)-4-hydroxy-2,3,4,5-tetrahydrodipicolinate + H2O + H(+). Its pathway is amino-acid biosynthesis; L-lysine biosynthesis via DAP pathway; (S)-tetrahydrodipicolinate from L-aspartate: step 3/4. In terms of biological role, catalyzes the condensation of (S)-aspartate-beta-semialdehyde [(S)-ASA] and pyruvate to 4-hydroxy-tetrahydrodipicolinate (HTPA). This chain is 4-hydroxy-tetrahydrodipicolinate synthase, found in Methylobacterium radiotolerans (strain ATCC 27329 / DSM 1819 / JCM 2831 / NBRC 15690 / NCIMB 10815 / 0-1).